We begin with the raw amino-acid sequence, 639 residues long: Serine/threonine-protein kinase PAK mbt (639 aa).

One can recognise a CRIB domain in the interval 11–24 (ISMPSNFEHRVHTG). Positions 25 to 367 (FDKRENKYVG…VVSAGDPREN (343 aa)) are linker. Disordered stretches follow at residues 79 to 195 (HHNN…SLLY) and 222 to 345 (RSNL…QDQR). Low complexity-rich tracts occupy residues 91 to 129 (NSSSTMMMGSMAPMNPMAPGAHPMMSHGPGMMMPPETGG), 138 to 159 (VARSNSLRSSSPPRVRRVANVP), 227 to 241 (PPSGGSMPQQQQTSP), and 274 to 295 (QQQQQQQQQAKQGGDQNQNPLH). The segment covering 296–308 (PHAHPHPHHHQHL) has biased composition (basic residues). The segment covering 309 to 331 (AKSASRASSSSGGASSAAQQASG) has biased composition (low complexity). Residues 368–619 (LDHFNKIGEG…AAELLAHPFL (252 aa)) form the Protein kinase domain. Residues 374 to 382 (IGEGSTGTV) and lysine 397 contribute to the ATP site. Aspartate 487 (proton acceptor) is an active-site residue. Serine 521 is subject to Phosphoserine. Threonine 525 is subject to Phosphothreonine.

This sequence belongs to the protein kinase superfamily. STE Ser/Thr protein kinase family. STE20 subfamily. Interacts tightly with GTP-bound but not GDP-bound Cdc42 and weakly with Rac1. The cofactor is Mg(2+). In terms of processing, autophosphorylated when activated by Cdc42. In terms of tissue distribution, expressed in adult brain and eye. High levels detected in developing photoreceptor cells and future bristle cells, and lower levels in cone and pigment cells, as detected in third instar eye imaginal disks (at protein level).

The protein resides in the cell junction. It is found in the adherens junction. Its subcellular location is the cell membrane. It catalyses the reaction L-seryl-[protein] + ATP = O-phospho-L-seryl-[protein] + ADP + H(+). The catalysed reaction is L-threonyl-[protein] + ATP = O-phospho-L-threonyl-[protein] + ADP + H(+). Involved in neurogenesis of the adult central nervous system, and together with Cdc42, regulates photoreceptor cell morphogenesis. Phosphorylates exogenous substrates when activated by Cdc42. This chain is Serine/threonine-protein kinase PAK mbt, found in Drosophila melanogaster (Fruit fly).